Reading from the N-terminus, the 373-residue chain is Enoyl-[acyl-carrier-protein] reductase, mitochondrial (373 aa).

The transit peptide at M1–D53 directs the protein to the mitochondrion. Position 61 is an N6-acetyllysine; alternate (K61). The residue at position 61 (K61) is an N6-succinyllysine; alternate. Y94 acts as the Proton donor in catalysis. Residues N167, N193 to V196, and R216 to R218 each bind NADP(+). K252 and K267 each carry N6-acetyllysine; alternate. N6-succinyllysine; alternate occurs at positions 252 and 267. NADP(+)-binding positions include Y285–M288 and F310–L312. At K316 the chain carries N6-succinyllysine. K368 lines the NADP(+) pocket.

The protein belongs to the zinc-containing alcohol dehydrogenase family. Quinone oxidoreductase subfamily. Homodimer. Isoform 2 interacts with PPARA in the nucleus and increases its activity. In terms of tissue distribution, highly expressed in skeletal and heart muscle. Expressed at lower level in placenta, liver, kidney and pancreas. Weakly or not expressed in lung.

It is found in the mitochondrion. It localises to the cytoplasm. The protein resides in the nucleus. The enzyme catalyses a 2,3-saturated acyl-[ACP] + NADP(+) = a (2E)-enoyl-[ACP] + NADPH + H(+). It carries out the reaction (2E)-butenoyl-[ACP] + NADPH + H(+) = butanoyl-[ACP] + NADP(+). It catalyses the reaction (2E)-hexenoyl-[ACP] + NADPH + H(+) = hexanoyl-[ACP] + NADP(+). The catalysed reaction is (2E)-octenoyl-[ACP] + NADPH + H(+) = octanoyl-[ACP] + NADP(+). The enzyme catalyses (2E)-decenoyl-[ACP] + NADPH + H(+) = decanoyl-[ACP] + NADP(+). It carries out the reaction (2E)-dodecenoyl-[ACP] + NADPH + H(+) = dodecanoyl-[ACP] + NADP(+). It catalyses the reaction (2E)-tetradecenoyl-[ACP] + NADPH + H(+) = tetradecanoyl-[ACP] + NADP(+). The catalysed reaction is (2E)-hexadecenoyl-[ACP] + NADPH + H(+) = hexadecanoyl-[ACP] + NADP(+). In terms of biological role, catalyzes the NADPH-dependent reduction of trans-2-enoyl thioesters in mitochondrial fatty acid synthesis (fatty acid synthesis type II). Fatty acid chain elongation in mitochondria uses acyl carrier protein (ACP) as an acyl group carrier, but the enzyme accepts both ACP and CoA thioesters as substrates in vitro. Displays a preference for medium-chain over short- and long-chain substrates. May provide the octanoyl chain used for lipoic acid biosynthesis, regulating protein lipoylation and mitochondrial respiratory activity particularly in Purkinje cells. Involved in iron homeostasis; affecting Fe-S cluster assembly and ceramide metabolism. Required for proper morphology and bioenergetic functions of mitochondria. Required for maintenance of neurons. The protein is Enoyl-[acyl-carrier-protein] reductase, mitochondrial (MECR) of Homo sapiens (Human).